Here is a 1308-residue protein sequence, read N- to C-terminus: Contactin-associated protein-like 4 (1308 aa).

A signal peptide spans 1 to 25 (MGSVTGAVLKTLLLLSTQNWNRVEA). The Extracellular segment spans residues 26 to 1241 (GNSYDCDDPL…LANAIKSDSA (1216 aa)). The F5/8 type C domain occupies 31–177 (CDDPLVSALP…IGMRIEVFGC (147 aa)). Cysteine 31 and cysteine 177 form a disulfide bridge. Laminin G-like domains are found at residues 212–364 (FKTM…SFSC) and 398–547 (FRTW…IDSC). Residues asparagine 260, asparagine 285, asparagine 359, and asparagine 538 are each glycosylated (N-linked (GlcNAc...) asparagine). Intrachain disulfides connect cysteine 332–cysteine 364, cysteine 515–cysteine 547, cysteine 553–cysteine 564, and cysteine 558–cysteine 573. The EGF-like 1 domain maps to 549 to 586 (ISDRCLPNYCEHGGECSQSWSTFHCNCTNTGYRGATCH). Asparagine 574 carries an N-linked (GlcNAc...) asparagine glycan. A disulfide bridge connects residues cysteine 575 and cysteine 585. Residues 587 to 792 (NSIYEQSCEA…LLCQGDRSFW (206 aa)) enclose the Fibrinogen C-terminal domain. Residues asparagine 602, asparagine 625, asparagine 637, asparagine 706, and asparagine 748 are each glycosylated (N-linked (GlcNAc...) asparagine). Positions 793–957 (NSASFDTEAS…AQVTPEVQPG (165 aa)) constitute a Laminin G-like 3 domain. 4 disulfide bridges follow: cysteine 931-cysteine 958, cysteine 962-cysteine 975, cysteine 969-cysteine 984, and cysteine 986-cysteine 996. In terms of domain architecture, EGF-like 2 spans 958 to 997 (CRGHCSSYGKLCRNGGKCRERPIGFFCDCTFSAYTGPFCS). N-linked (GlcNAc...) asparagine glycosylation is found at asparagine 1023 and asparagine 1073. In terms of domain architecture, Laminin G-like 4 spans 1046–1202 (FRTTRTPSLL…VTGHVTESSC (157 aa)). Residues cysteine 1167 and cysteine 1202 are joined by a disulfide bond. Residues 1242-1262 (VIGGLIAVVIFILLCITAIAV) traverse the membrane as a helical segment. The Cytoplasmic portion of the chain corresponds to 1263–1308 (RIYQQKRLYKRSEAKRSENVDSAEAVLKSELNIQNAVNENQKEYFF).

Belongs to the neurexin family. In terms of assembly, interacts with TIAM1.

The protein resides in the presynaptic cell membrane. In terms of biological role, presynaptic protein involved in both dopaminergic synaptic transmission and GABAergic system, thereby participating in the structural maturation of inhibitory interneuron synapses. Involved in the dopaminergic synaptic transmission by attenuating dopamine release through a presynaptic mechanism. Also participates in the GABAergic system. The chain is Contactin-associated protein-like 4 (CNTNAP4) from Homo sapiens (Human).